A 76-amino-acid polypeptide reads, in one-letter code: Exodeoxyribonuclease 7 small subunit (76 aa).

The protein belongs to the XseB family. Heterooligomer composed of large and small subunits.

It is found in the cytoplasm. The catalysed reaction is Exonucleolytic cleavage in either 5'- to 3'- or 3'- to 5'-direction to yield nucleoside 5'-phosphates.. Functionally, bidirectionally degrades single-stranded DNA into large acid-insoluble oligonucleotides, which are then degraded further into small acid-soluble oligonucleotides. This is Exodeoxyribonuclease 7 small subunit from Staphylococcus epidermidis (strain ATCC 35984 / DSM 28319 / BCRC 17069 / CCUG 31568 / BM 3577 / RP62A).